Consider the following 342-residue polypeptide: S-adenosylmethionine:tRNA ribosyltransferase-isomerase (342 aa).

Belongs to the QueA family. As to quaternary structure, monomer.

It localises to the cytoplasm. The enzyme catalyses 7-aminomethyl-7-carbaguanosine(34) in tRNA + S-adenosyl-L-methionine = epoxyqueuosine(34) in tRNA + adenine + L-methionine + 2 H(+). Its pathway is tRNA modification; tRNA-queuosine biosynthesis. In terms of biological role, transfers and isomerizes the ribose moiety from AdoMet to the 7-aminomethyl group of 7-deazaguanine (preQ1-tRNA) to give epoxyqueuosine (oQ-tRNA). This is S-adenosylmethionine:tRNA ribosyltransferase-isomerase from Listeria welshimeri serovar 6b (strain ATCC 35897 / DSM 20650 / CCUG 15529 / CIP 8149 / NCTC 11857 / SLCC 5334 / V8).